The following is a 544-amino-acid chain: NXPE family member 4 (544 aa).

An N-terminal signal peptide occupies residues 1-27; the sequence is MKISMINYKSLLALLFILASWIIFTVF. N-linked (GlcNAc...) asparagine glycosylation is found at asparagine 29, asparagine 38, asparagine 47, asparagine 48, asparagine 92, asparagine 160, and asparagine 210.

The protein belongs to the NXPE family.

It is found in the secreted. The chain is NXPE family member 4 (NXPE4) from Homo sapiens (Human).